Reading from the N-terminus, the 367-residue chain is MATKHLFLLPGDGIGPEAMAEVKKLISAMNEKLGSGFATDEGLVGGCAYDAHGAAISDADMAKAMAADAVLFGAVGGPKWDAVPYEVRPEAGLLRLRKDMELFANLRPAICYPALAASSSLKQEVVEGLDILIVRELTGGVYFGEPKQIIDLGNGQKRGIDTQVYDTFEIERISGVAFELARTRKNHVTSMEKRNVMKSGVLWNEVVTQTHKARYADVKLDHMLADAGGMQLVRWPKQFDVIVTDNLFGDMLSDIAAMLTGSIGMLPSASLGAPDVKTKKRKALYEPVHGSAPDIAGKGIANPIAMIASFAMCLRYSFGMVDEADRLEGAIAAVLDQGLRTKDIFSPGMTEVGTVEMGDAIIAKFLG.

Residue 77–90 participates in NAD(+) binding; it reads GPKWDAVPYEVRPE. The substrate site is built by Arg-97, Arg-107, Arg-135, and Asp-226. Mg(2+) is bound by residues Asp-226, Asp-250, and Asp-254. Residue 290-302 participates in NAD(+) binding; it reads GSAPDIAGKGIAN.

The protein belongs to the isocitrate and isopropylmalate dehydrogenases family. LeuB type 1 subfamily. As to quaternary structure, homodimer. Mg(2+) serves as cofactor. Mn(2+) is required as a cofactor.

The protein resides in the cytoplasm. It carries out the reaction (2R,3S)-3-isopropylmalate + NAD(+) = 4-methyl-2-oxopentanoate + CO2 + NADH. The protein operates within amino-acid biosynthesis; L-leucine biosynthesis; L-leucine from 3-methyl-2-oxobutanoate: step 3/4. Its function is as follows. Catalyzes the oxidation of 3-carboxy-2-hydroxy-4-methylpentanoate (3-isopropylmalate) to 3-carboxy-4-methyl-2-oxopentanoate. The product decarboxylates to 4-methyl-2 oxopentanoate. This Mesorhizobium japonicum (strain LMG 29417 / CECT 9101 / MAFF 303099) (Mesorhizobium loti (strain MAFF 303099)) protein is 3-isopropylmalate dehydrogenase.